A 306-amino-acid polypeptide reads, in one-letter code: Bifunctional protein FolD (306 aa).

NADP(+) contacts are provided by residues 169–171 (GRS), Ser194, and Ile235.

This sequence belongs to the tetrahydrofolate dehydrogenase/cyclohydrolase family. In terms of assembly, homodimer.

It catalyses the reaction (6R)-5,10-methylene-5,6,7,8-tetrahydrofolate + NADP(+) = (6R)-5,10-methenyltetrahydrofolate + NADPH. The enzyme catalyses (6R)-5,10-methenyltetrahydrofolate + H2O = (6R)-10-formyltetrahydrofolate + H(+). Its pathway is one-carbon metabolism; tetrahydrofolate interconversion. Its function is as follows. Catalyzes the oxidation of 5,10-methylenetetrahydrofolate to 5,10-methenyltetrahydrofolate and then the hydrolysis of 5,10-methenyltetrahydrofolate to 10-formyltetrahydrofolate. The sequence is that of Bifunctional protein FolD from Thermosynechococcus vestitus (strain NIES-2133 / IAM M-273 / BP-1).